The primary structure comprises 297 residues: Myoblast determination protein 1 homolog (297 aa).

The disordered stretch occupies residues 52–76 (KPEEHPHHHGHHHGHPHEEEHVRAP). The region spanning 101 to 152 (DRRKAATMRERRRLSKVNEAFETLKRCTSTNPNQRLPKVEILRNAIRYIESL) is the bHLH domain. Disordered stretches follow at residues 171–221 (SGES…GKSS) and 243–297 (CPIL…YQVL). Composition is skewed to polar residues over residues 174–184 (SDASSPRSNCS) and 258–297 (CSPQ…YQVL).

In terms of assembly, efficient DNA binding requires dimerization with another bHLH protein. Seems to form active heterodimers with ITF-2.

It localises to the nucleus. Its function is as follows. Acts as a transcriptional activator that promotes transcription of muscle-specific target genes and plays a role in muscle differentiation. Induces fibroblasts to differentiate into myoblasts. Interacts with and is inhibited by the twist protein. This interaction probably involves the basic domains of both proteins. In Coturnix japonica (Japanese quail), this protein is Myoblast determination protein 1 homolog (MYOD1).